Here is a 344-residue protein sequence, read N- to C-terminus: Transcription factor HRS1 (344 aa).

The interval 88 to 184 (IKDSSTSNEE…DGGGGRKQRR (97 aa)) is disordered. Acidic residues predominate over residues 95–104 (NEEEDEEFDD). Basic and acidic residues-rich tracts occupy residues 105 to 124 (EHGN…KSDW) and 138 to 178 (LLPK…DGGG). An HTH myb-type domain is found at 178–238 (GGRKQRRCWS…HLQKYRLHTR (61 aa)). Residues 209–234 (PKQIREFMKVDGLTNDEVKSHLQKYR) constitute a DNA-binding region (H-T-H motif). Low complexity predominate over residues 269 to 291 (STGKTTGGATTSSTTTTTGIYGT). The disordered stretch occupies residues 269–322 (STGKTTGGATTSSTTTTTGIYGTMAAPPPPQWPSHSNYRPSIIVDEGSGSHSEG).

Expressed in the root hair region and root hair cells.

The protein resides in the nucleus. Its function is as follows. Transcription factor involved in nitrate and phosphate signaling in roots. Integrates nitrate and phosphate starvation responses and adaptation of root architecture depending on nutrient availabilities. Acts downstream of the nitrate sensor and transporter NPF6.3/NRT1.1. Represses primary root development in response to phosphate deficiency conditions, only when nitrate is present. Involved in the modulation of primary root and root hair growth in phosphate-deprived environment. May be required for suppressing abscisic acid (ABA) signaling in germinating embryo axis, which promotes the timely germination of seeds. In Arabidopsis thaliana (Mouse-ear cress), this protein is Transcription factor HRS1.